The following is a 162-amino-acid chain: Interleukin-15 (162 aa).

A signal peptide spans 1 to 29; the sequence is MRILKPYLRSTSIQCYLCLLLNSHFLTEA. Residues 30–48 constitute a propeptide that is removed on maturation; the sequence is CIPVFILSCINAGLPKTEA. 2 cysteine pairs are disulfide-bonded: Cys-83–Cys-133 and Cys-90–Cys-136. N-linked (GlcNAc...) asparagine glycosylation is found at Asn-104 and Asn-127.

This sequence belongs to the IL-15/IL-21 family.

It is found in the secreted. Cytokine that plays a major role in the development of inflammatory and protective immune responses to microbial invaders and parasites by modulating immune cells of both the innate and adaptive immune systems. Stimulates the proliferation of natural killer cells, T-cells and B-cells and promotes the secretion of several cytokines. In monocytes, induces the production of IL8 and monocyte chemotactic protein 1/CCL2, two chemokines that attract neutrophils and monocytes respectively to sites of infection. Unlike most cytokines, which are secreted in soluble form, IL15 is expressed in association with its high affinity IL15RA on the surface of IL15-producing cells and delivers signals to target cells that express IL2RB and IL2RG receptor subunits. Binding to its receptor triggers the phosphorylation of JAK1 and JAK3 and the recruitment and subsequent phosphorylation of signal transducer and activator of transcription-3/STAT3 and STAT5. In mast cells, induces the rapid tyrosine phosphorylation of STAT6 and thereby controls mast cell survival and release of cytokines such as IL4. The protein is Interleukin-15 (IL15) of Felis catus (Cat).